A 91-amino-acid chain; its full sequence is Large ribosomal subunit protein eL37 (91 aa).

4 residues coordinate Zn(2+): Cys19, Cys22, Cys34, and Cys37. The segment at 19–37 (CKRCGKSSFHIQKKRCASC) adopts a C4-type zinc-finger fold.

The protein belongs to the eukaryotic ribosomal protein eL37 family. Zn(2+) is required as a cofactor.

In terms of biological role, binds to the 23S rRNA. This Caenorhabditis elegans protein is Large ribosomal subunit protein eL37.